We begin with the raw amino-acid sequence, 146 residues long: Hemoglobin subunit beta-1 (146 aa).

The 145-residue stretch at 2–146 (EWTDKERAII…VVSALGKQYH (145 aa)) folds into the Globin domain. Heme b contacts are provided by H63 and H92.

This sequence belongs to the globin family. In terms of assembly, hb 1 is a heterotetramer of two alpha-1 and two beta-1 chains. Red blood cells.

Its function is as follows. Involved in oxygen transport from gills to the various peripheral tissues. The sequence is that of Hemoglobin subunit beta-1 (hbb1) from Gobionotothen gibberifrons (Humped rockcod).